A 401-amino-acid chain; its full sequence is MSMALLLTSPAMKQKPAVITSPRRGSSPSRRLRVSCVTTNPARKKNETCNHFRPIKEVNNQLTHTIPQEKLEIFKSMENWAEQKLLPYLKPVEDSWQPQDFLPAPENDDEFYDRVKEIRERTKEIPDDYFVVLVGDMITEEALPTYQTTLNTLDGVKDETGGSLSPWAVWIRAWTAEENRHGDLLNKYLYLTGRVDMRHVEKTIQYLIGSGMDSKFENNPYNGFIYTSFQERATFISHGNTARLATTYGDVTLAKICGTIAADEKRHETAYTKIVEKLFEIDPDGSVQALASMMKKRITMPAHLMHDGRDNDLFDHYAAVAQRIGVYTAADYAGILEFLLRRWKVESLGLGLSGEGRRAQEYLCTLPQRIKRLEERANDRVKLVSKPSVSFSWVFGRDVKL.

The disordered stretch occupies residues 1 to 31; sequence MSMALLLTSPAMKQKPAVITSPRRGSSPSRR. The transit peptide at 1 to 35 directs the protein to the chloroplast; it reads MSMALLLTSPAMKQKPAVITSPRRGSSPSRRLRVS. Residues Glu140, Glu178, His181, Glu231, Glu264, and His267 each contribute to the Fe cation site.

The protein belongs to the fatty acid desaturase type 2 family. Homodimer. Requires Fe(2+) as cofactor. Ubiquitously expressed with a preference in leaves, flowers and stems.

It is found in the plastid. The protein localises to the chloroplast. The catalysed reaction is octadecanoyl-[ACP] + 2 reduced [2Fe-2S]-[ferredoxin] + O2 + 2 H(+) = (9Z)-octadecenoyl-[ACP] + 2 oxidized [2Fe-2S]-[ferredoxin] + 2 H2O. Its pathway is lipid metabolism; fatty acid metabolism. In terms of biological role, converts stearoyl-ACP to oleoyl-ACP by introduction of a cis double bond between carbons 9 and 10 of the acyl chain. Also able to convert palmitoyl-ACP to palmitoleoyl-ACP at the C9 position. Exhibits delta-9 palmitoyl-[acyl-carrier-protein] desaturase (PAD) activity. Involved in omega-7 monounsaturated fatty acid biosynthesis, especially in the endosperm oil. In Arabidopsis thaliana (Mouse-ear cress), this protein is Stearoyl-[acyl-carrier-protein] 9-desaturase 3, chloroplastic (S-ACP-DES3).